Consider the following 354-residue polypeptide: Guanine nucleotide-binding protein alpha-12 subunit (354 aa).

The G-alpha domain occupies Gln31–Leu354. The segment at Lys34–Thr47 is G1 motif. Residues Gly39 to Ser46, Leu178 to Thr184, Asp203 to Gln207, Asn272 to Asp275, and Ala329 contribute to the GTP site. The Mg(2+) site is built by Ser46 and Thr184. Residues Asp176 to Thr184 are G2 motif. Positions Phe199–Lys208 are G3 motif. Positions Val268–Asp275 are G4 motif. The interval Thr327–Ser332 is G5 motif.

Belongs to the G-alpha family. In terms of assembly, g proteins are composed of 3 units; alpha, beta and gamma. The alpha chain contains the guanine nucleotide binding site.

Guanine nucleotide-binding proteins (G proteins) are involved as modulators or transducers in various transmembrane signaling systems. This chain is Guanine nucleotide-binding protein alpha-12 subunit (gpaL), found in Dictyostelium discoideum (Social amoeba).